The chain runs to 289 residues: Energy-coupling factor transporter ATP-binding protein EcfA2 (289 aa).

Positions 3–246 constitute an ABC transporter domain; the sequence is IEIKDVEHRY…KDDIAALGLD (244 aa). 40–47 is an ATP binding site; the sequence is GHTGSGKS.

It belongs to the ABC transporter superfamily. Energy-coupling factor EcfA family. Forms a stable energy-coupling factor (ECF) transporter complex composed of 2 membrane-embedded substrate-binding proteins (S component), 2 ATP-binding proteins (A component) and 2 transmembrane proteins (T component).

It localises to the cell membrane. In terms of biological role, ATP-binding (A) component of a common energy-coupling factor (ECF) ABC-transporter complex. Unlike classic ABC transporters this ECF transporter provides the energy necessary to transport a number of different substrates. The protein is Energy-coupling factor transporter ATP-binding protein EcfA2 of Bacillus licheniformis (strain ATCC 14580 / DSM 13 / JCM 2505 / CCUG 7422 / NBRC 12200 / NCIMB 9375 / NCTC 10341 / NRRL NRS-1264 / Gibson 46).